The following is a 949-amino-acid chain: uncharacterized protein (949 aa).

The Calponin-homology (CH) domain occupies 64 to 170 (LCSVHEAKKW…YCLHALSYLL (107 aa)).

Its subcellular location is the nucleus. This is an uncharacterized protein from Schizosaccharomyces pombe (strain 972 / ATCC 24843) (Fission yeast).